Reading from the N-terminus, the 335-residue chain is Holliday junction branch migration complex subunit RuvB (335 aa).

The tract at residues 2-184 (ADERIVSAEN…FGIVEHMAYY (183 aa)) is large ATPase domain (RuvB-L). ATP is bound by residues Leu-23, Arg-24, Gly-65, Lys-68, Thr-69, Thr-70, 131–133 (EDF), Arg-174, Tyr-184, and Arg-221. Thr-69 contributes to the Mg(2+) binding site. The interval 185–255 (TEADLMDIVQ…IADHALSQLQ (71 aa)) is small ATPAse domain (RuvB-S). Residues 258–335 (IRGLDGVDRK…AHLGMPYPEK (78 aa)) form a head domain (RuvB-H) region. Positions 313 and 318 each coordinate DNA.

The protein belongs to the RuvB family. Homohexamer. Forms an RuvA(8)-RuvB(12)-Holliday junction (HJ) complex. HJ DNA is sandwiched between 2 RuvA tetramers; dsDNA enters through RuvA and exits via RuvB. An RuvB hexamer assembles on each DNA strand where it exits the tetramer. Each RuvB hexamer is contacted by two RuvA subunits (via domain III) on 2 adjacent RuvB subunits; this complex drives branch migration. In the full resolvosome a probable DNA-RuvA(4)-RuvB(12)-RuvC(2) complex forms which resolves the HJ.

It is found in the cytoplasm. The catalysed reaction is ATP + H2O = ADP + phosphate + H(+). In terms of biological role, the RuvA-RuvB-RuvC complex processes Holliday junction (HJ) DNA during genetic recombination and DNA repair, while the RuvA-RuvB complex plays an important role in the rescue of blocked DNA replication forks via replication fork reversal (RFR). RuvA specifically binds to HJ cruciform DNA, conferring on it an open structure. The RuvB hexamer acts as an ATP-dependent pump, pulling dsDNA into and through the RuvAB complex. RuvB forms 2 homohexamers on either side of HJ DNA bound by 1 or 2 RuvA tetramers; 4 subunits per hexamer contact DNA at a time. Coordinated motions by a converter formed by DNA-disengaged RuvB subunits stimulates ATP hydrolysis and nucleotide exchange. Immobilization of the converter enables RuvB to convert the ATP-contained energy into a lever motion, pulling 2 nucleotides of DNA out of the RuvA tetramer per ATP hydrolyzed, thus driving DNA branch migration. The RuvB motors rotate together with the DNA substrate, which together with the progressing nucleotide cycle form the mechanistic basis for DNA recombination by continuous HJ branch migration. Branch migration allows RuvC to scan DNA until it finds its consensus sequence, where it cleaves and resolves cruciform DNA. The polypeptide is Holliday junction branch migration complex subunit RuvB (Latilactobacillus sakei subsp. sakei (strain 23K) (Lactobacillus sakei subsp. sakei)).